The primary structure comprises 364 residues: MKTNLLNYDLQGLTRHFADMGEKPFRAKQVMRWMHQSGAQNFNEMTDLAKSLRHKLNEQAGIEIPKLMMSQKSSDGTRKWLLDVGTGNGVETVFIPESDRGTLCISSQVGCALECTFCSTGRQGFNRNLTAAEIIGQLWWANKAMGVTPKNERVISNVVMMGMGEPMANFDNVVTALSIMLDDHGYGLSRRRVTVSTSGMVPQMDRLRDVMPVALAVSLHASNDEVRNQIVPLNKKYPLKELMAACQRYLVKAPRDFITFEYVMLDGINDKAQHARELIELVKDVPCKFNLIPFNPFPNSGYERSSNENIRVFRDILQQAGFVVTVRKTRGDDIDAACGQLAGQVQDKTRRQQKWQQILIGQQG.

Glu91 acts as the Proton acceptor in catalysis. Residues 97 to 333 form the Radical SAM core domain; it reads ESDRGTLCIS…VTVRKTRGDD (237 aa). Cys104 and Cys338 are disulfide-bonded. Residues Cys111, Cys115, and Cys118 each coordinate [4Fe-4S] cluster. S-adenosyl-L-methionine is bound by residues 164–165, Ser196, 218–220, and Asn295; these read GE and SLH. Cys338 serves as the catalytic S-methylcysteine intermediate.

This sequence belongs to the radical SAM superfamily. RlmN family. [4Fe-4S] cluster is required as a cofactor.

Its subcellular location is the cytoplasm. It carries out the reaction adenosine(2503) in 23S rRNA + 2 reduced [2Fe-2S]-[ferredoxin] + 2 S-adenosyl-L-methionine = 2-methyladenosine(2503) in 23S rRNA + 5'-deoxyadenosine + L-methionine + 2 oxidized [2Fe-2S]-[ferredoxin] + S-adenosyl-L-homocysteine. The catalysed reaction is adenosine(37) in tRNA + 2 reduced [2Fe-2S]-[ferredoxin] + 2 S-adenosyl-L-methionine = 2-methyladenosine(37) in tRNA + 5'-deoxyadenosine + L-methionine + 2 oxidized [2Fe-2S]-[ferredoxin] + S-adenosyl-L-homocysteine. In terms of biological role, specifically methylates position 2 of adenine 2503 in 23S rRNA and position 2 of adenine 37 in tRNAs. m2A2503 modification seems to play a crucial role in the proofreading step occurring at the peptidyl transferase center and thus would serve to optimize ribosomal fidelity. The sequence is that of Dual-specificity RNA methyltransferase RlmN from Neisseria meningitidis serogroup C / serotype 2a (strain ATCC 700532 / DSM 15464 / FAM18).